The following is a 745-amino-acid chain: Isocitrate dehydrogenase [NADP] 2 (745 aa).

The NADP(+) site is built by asparagine 87 and serine 89. Residues serine 134, asparagine 137, arginine 141, arginine 147, and lysine 257 each contribute to the D-threo-isocitrate site. A Mg(2+)-binding site is contributed by aspartate 352. Positions 422 and 550 each coordinate D-threo-isocitrate. Mg(2+)-binding residues include aspartate 551 and aspartate 555. Residues glycine 587, serine 588, alanine 589, histidine 592, arginine 603, aspartate 605, and arginine 652 each contribute to the NADP(+) site.

Belongs to the monomeric-type IDH family. In terms of assembly, may form homotrimers. Also forms homotetramers at low salt concentration, which are dissociated into homodimers, but not into monomers, at high salt concentration (1 M). Requires Mg(2+) as cofactor.

It catalyses the reaction D-threo-isocitrate + NADP(+) = 2-oxoglutarate + CO2 + NADPH. Its function is as follows. Catalyzes the oxidative decarboxylation of isocitrate to 2-oxoglutarate and carbon dioxide with the concomitant reduction of NADP(+). Cannot use NAD(+). The sequence is that of Isocitrate dehydrogenase [NADP] 2 from Mycobacterium tuberculosis (strain ATCC 25618 / H37Rv).